Consider the following 414-residue polypeptide: Serine hydroxymethyltransferase (414 aa).

(6S)-5,6,7,8-tetrahydrofolate-binding positions include leucine 121 and 125-127 (GHL). Position 229 is an N6-(pyridoxal phosphate)lysine (lysine 229).

This sequence belongs to the SHMT family. In terms of assembly, homodimer. The cofactor is pyridoxal 5'-phosphate.

Its subcellular location is the cytoplasm. It carries out the reaction (6R)-5,10-methylene-5,6,7,8-tetrahydrofolate + glycine + H2O = (6S)-5,6,7,8-tetrahydrofolate + L-serine. It functions in the pathway one-carbon metabolism; tetrahydrofolate interconversion. Its pathway is amino-acid biosynthesis; glycine biosynthesis; glycine from L-serine: step 1/1. Its function is as follows. Catalyzes the reversible interconversion of serine and glycine with tetrahydrofolate (THF) serving as the one-carbon carrier. This reaction serves as the major source of one-carbon groups required for the biosynthesis of purines, thymidylate, methionine, and other important biomolecules. Also exhibits THF-independent aldolase activity toward beta-hydroxyamino acids, producing glycine and aldehydes, via a retro-aldol mechanism. In Polaromonas naphthalenivorans (strain CJ2), this protein is Serine hydroxymethyltransferase.